The chain runs to 101 residues: Large ribosomal subunit protein bL21 (101 aa).

The protein belongs to the bacterial ribosomal protein bL21 family. In terms of assembly, part of the 50S ribosomal subunit. Contacts protein L20.

Functionally, this protein binds to 23S rRNA in the presence of protein L20. The polypeptide is Large ribosomal subunit protein bL21 (Corynebacterium diphtheriae (strain ATCC 700971 / NCTC 13129 / Biotype gravis)).